Reading from the N-terminus, the 232-residue chain is C4-dicarboxylate TRAP transporter small permease protein DctQ (232 aa).

A run of 4 helical transmembrane segments spans residues 30-50 (EFLIAFFMGAMTLLTFANVIM), 58-78 (ILWALEGTVFMFAWMVLVGAS), 103-123 (LYALVAVACCLAFSILLLIGS), and 167-187 (FIPYAALPIGMALLTFRFLQI).

It belongs to the TRAP transporter small permease family. In terms of assembly, the complex comprises the extracytoplasmic solute receptor protein DctP, and the two transmembrane proteins DctQ and DctM.

It localises to the cell inner membrane. Its function is as follows. Part of the tripartite ATP-independent periplasmic (TRAP) transport system DctPQM involved in C4-dicarboxylates uptake. This is C4-dicarboxylate TRAP transporter small permease protein DctQ from Vibrio cholerae serotype O1 (strain ATCC 39315 / El Tor Inaba N16961).